The following is a 100-amino-acid chain: Osteocalcin (100 aa).

The N-terminal stretch at 1 to 23 is a signal peptide; it reads MRTPMLLALLALATLCLAGRADA. A propeptide spanning residues 24–51 is cleaved from the precursor; that stretch reads KPGDAESGKGAAFVSKQEGSEVVKRLRR. Residues 52 to 98 enclose the Gla domain; that stretch reads YLDHWLGAPAPYPDPLEPKREVCELNPDCDELADHIGFQEAYRRFYG. P60 is modified (4-hydroxyproline). Ca(2+) contacts are provided by E68, E72, E75, and D81. 4-carboxyglutamate is present on residues E68, E72, and E75. A disulfide bond links C74 and C80.

The protein belongs to the osteocalcin/matrix Gla protein family. Gamma-carboxyglutamate residues are formed by vitamin K dependent carboxylation by GGCX. These residues are essential for the binding of calcium. Decarboxylation promotes the hormone activity.

It localises to the secreted. Its function is as follows. The carboxylated form is one of the main organic components of the bone matrix, which constitutes 1-2% of the total bone protein. It acts as a negative regulator of bone formation and is required to limit bone formation without impairing bone resorption or mineralization. The carboxylated form binds strongly to apatite and calcium. Functionally, the uncarboxylated form acts as a hormone secreted by osteoblasts, which regulates different cellular processes, such as energy metabolism, male fertility and brain development. Regulates of energy metabolism by acting as a hormone favoring pancreatic beta-cell proliferation, insulin secretion and sensitivity and energy expenditure. Uncarboxylated osteocalcin hormone also promotes testosterone production in the testes: acts as a ligand for G protein-coupled receptor GPRC6A at the surface of Leydig cells, initiating a signaling response that promotes the expression of enzymes required for testosterone synthesis in a CREB-dependent manner. Also acts as a regulator of brain development: osteocalcin hormone crosses the blood-brain barrier and acts as a ligand for GPR158 on neurons, initiating a signaling response that prevents neuronal apoptosis in the hippocampus, favors the synthesis of all monoamine neurotransmitters and inhibits that of gamma-aminobutyric acid (GABA). Osteocalcin also crosses the placenta during pregnancy and maternal osteocalcin is required for fetal brain development. This Bos taurus (Bovine) protein is Osteocalcin (BGLAP).